We begin with the raw amino-acid sequence, 467 residues long: ATP synthase subunit beta (467 aa).

Residue 150–157 (GGAGVGKT) coordinates ATP.

This sequence belongs to the ATPase alpha/beta chains family. F-type ATPases have 2 components, CF(1) - the catalytic core - and CF(0) - the membrane proton channel. CF(1) has five subunits: alpha(3), beta(3), gamma(1), delta(1), epsilon(1). CF(0) has three main subunits: a(1), b(2) and c(9-12). The alpha and beta chains form an alternating ring which encloses part of the gamma chain. CF(1) is attached to CF(0) by a central stalk formed by the gamma and epsilon chains, while a peripheral stalk is formed by the delta and b chains.

It localises to the cell inner membrane. It carries out the reaction ATP + H2O + 4 H(+)(in) = ADP + phosphate + 5 H(+)(out). Produces ATP from ADP in the presence of a proton gradient across the membrane. The catalytic sites are hosted primarily by the beta subunits. The sequence is that of ATP synthase subunit beta from Vibrio alginolyticus.